The primary structure comprises 1018 residues: Collagen, type I, alpha 1a (1018 aa).

Residues 1-10 are compositionally biased toward basic and acidic residues; the sequence is QMSAGYDDKS. The interval 1 to 991 is disordered; sequence QMSAGYDDKS…SGEYWLDPDQ (991 aa). Residues 13–30 are compositionally biased toward pro residues; it reads MPVPGPMGPMGPRGPPGS. Low complexity predominate over residues 31 to 58; the sequence is PGASGPQGFTGPPGEPGEAGPSGAMGPR. Positions 67–81 are enriched in basic and acidic residues; that stretch reads NGEDGESGKPGRGGE. The segment covering 126 to 136 has biased composition (low complexity); that stretch reads PRGNDGAAGAA. The segment covering 138 to 151 has biased composition (pro residues); that stretch reads PPGPTGPAGPPGFP. The segment covering 152-170 has biased composition (gly residues); that stretch reads GGPGAKGDAGAQGGRGPEG. Composition is skewed to low complexity over residues 171 to 214 and 223 to 261; these read PAGA…AGAP and SGPQ…APGV. Positions 284-296 are enriched in gly residues; it reads GARGGPGGRGFPG. Composition is skewed to low complexity over residues 370-385, 424-442, 452-510, and 543-558; these read VGAR…PGPK, AGPA…PGFQ, LPGE…QGMP, and RGLT…AGAT. A compositionally biased stretch (gly residues) spans 568–577; it reads GPVGPGGARG. Composition is skewed to low complexity over residues 591–627 and 641–663; these read AGFA…AGPT and PKGA…AGRV. Residues 665–677 show a composition bias toward pro residues; sequence PPGPSGNPGPPGP. 2 stretches are compositionally biased toward low complexity: residues 701-746 and 775-795; these read EVGA…XXPG and PGLA…NEGS. The span at 819–829 shows a compositional bias: pro residues; it reads APGPPGAPGPV. Positions 843–862 are enriched in low complexity; that stretch reads PAGPAGSAGPAGPRGPAGAP. Positions 865–876 are enriched in basic and acidic residues; that stretch reads RGDKGESGEAGE. Residues 889–925 show a composition bias toward low complexity; sequence SGSSGEQGPAGAAGPAGPRGPAGSAGSPGKDGMSGLP. The 87-residue stretch at 932–1018 folds into the Fibrillar collagen NC1 domain; it reads GPRGGFDLGF…CTSHTGTWGK (87 aa). The span at 948-959 shows a compositional bias: basic and acidic residues; that stretch reads KAPDPFRDRDLE. Polar residues predominate over residues 963-973; that stretch reads TLKSLSQQLEQ.

It belongs to the fibrillar collagen family.

Its subcellular location is the secreted. The protein resides in the extracellular space. It localises to the extracellular matrix. This Epinephelus costae (Goldblotch grouper) protein is Collagen, type I, alpha 1a.